We begin with the raw amino-acid sequence, 261 residues long: Ribonuclease HII (261 aa).

Positions 71–259 constitute an RNase H type-2 domain; sequence KYIAGVDEVG…VKEAKLHFDS (189 aa). Positions 77, 78, and 169 each coordinate a divalent metal cation.

It belongs to the RNase HII family. Requires Mn(2+) as cofactor. It depends on Mg(2+) as a cofactor.

Its subcellular location is the cytoplasm. It catalyses the reaction Endonucleolytic cleavage to 5'-phosphomonoester.. In terms of biological role, endonuclease that specifically degrades the RNA of RNA-DNA hybrids. The polypeptide is Ribonuclease HII (Listeria monocytogenes serotype 4a (strain HCC23)).